We begin with the raw amino-acid sequence, 332 residues long: Ribosomal RNA small subunit methyltransferase C (332 aa).

It belongs to the methyltransferase superfamily. RsmC family. As to quaternary structure, monomer.

The protein resides in the cytoplasm. The enzyme catalyses guanosine(1207) in 16S rRNA + S-adenosyl-L-methionine = N(2)-methylguanosine(1207) in 16S rRNA + S-adenosyl-L-homocysteine + H(+). Functionally, specifically methylates the guanine in position 1207 of 16S rRNA in the 30S particle. The protein is Ribosomal RNA small subunit methyltransferase C of Pseudomonas putida (strain GB-1).